The sequence spans 161 residues: ATP synthase subunit b 1 (161 aa).

Residues 3–23 form a helical membrane-spanning segment; the sequence is LDATFYALVGLILFFVLIAYL.

Belongs to the ATPase B chain family. In terms of assembly, F-type ATPases have 2 components, F(1) - the catalytic core - and F(0) - the membrane proton channel. F(1) has five subunits: alpha(3), beta(3), gamma(1), delta(1), epsilon(1). F(0) has three main subunits: a(1), b(2) and c(10-14). The alpha and beta chains form an alternating ring which encloses part of the gamma chain. F(1) is attached to F(0) by a central stalk formed by the gamma and epsilon chains, while a peripheral stalk is formed by the delta and b chains.

It is found in the cell inner membrane. Its function is as follows. F(1)F(0) ATP synthase produces ATP from ADP in the presence of a proton or sodium gradient. F-type ATPases consist of two structural domains, F(1) containing the extramembraneous catalytic core and F(0) containing the membrane proton channel, linked together by a central stalk and a peripheral stalk. During catalysis, ATP synthesis in the catalytic domain of F(1) is coupled via a rotary mechanism of the central stalk subunits to proton translocation. In terms of biological role, component of the F(0) channel, it forms part of the peripheral stalk, linking F(1) to F(0). This is ATP synthase subunit b 1 from Sinorhizobium medicae (strain WSM419) (Ensifer medicae).